The primary structure comprises 35 residues: Phosphoribulokinase (35 aa).

This sequence belongs to the phosphoribulokinase family.

It is found in the plastid. Its subcellular location is the chloroplast. The catalysed reaction is D-ribulose 5-phosphate + ATP = D-ribulose 1,5-bisphosphate + ADP + H(+). It participates in carbohydrate biosynthesis; Calvin cycle. Light regulated via thioredoxin by reversible oxidation/reduction of sulfhydryl/disulfide groups. The chain is Phosphoribulokinase from Pinus pinaster (Maritime pine).